The sequence spans 360 residues: Phospho-N-acetylmuramoyl-pentapeptide-transferase (360 aa).

The next 10 membrane-spanning stretches (helical) occupy residues 27–47 (GATA…IAAL), 74–94 (TMGG…WANL), 99–119 (VWVV…DDYL), 135–155 (LLLE…LGTP), 165–185 (INGF…FVIV), 199–219 (GLAI…AYLA), 236–256 (AGEL…FLWF), 263–283 (IFMG…VAVA), 288–308 (IVLA…IVQV), and 337–357 (QVVV…LSTL).

Belongs to the glycosyltransferase 4 family. MraY subfamily. Requires Mg(2+) as cofactor.

It is found in the cell inner membrane. It catalyses the reaction UDP-N-acetyl-alpha-D-muramoyl-L-alanyl-gamma-D-glutamyl-meso-2,6-diaminopimeloyl-D-alanyl-D-alanine + di-trans,octa-cis-undecaprenyl phosphate = di-trans,octa-cis-undecaprenyl diphospho-N-acetyl-alpha-D-muramoyl-L-alanyl-D-glutamyl-meso-2,6-diaminopimeloyl-D-alanyl-D-alanine + UMP. The protein operates within cell wall biogenesis; peptidoglycan biosynthesis. Functionally, catalyzes the initial step of the lipid cycle reactions in the biosynthesis of the cell wall peptidoglycan: transfers peptidoglycan precursor phospho-MurNAc-pentapeptide from UDP-MurNAc-pentapeptide onto the lipid carrier undecaprenyl phosphate, yielding undecaprenyl-pyrophosphoryl-MurNAc-pentapeptide, known as lipid I. The chain is Phospho-N-acetylmuramoyl-pentapeptide-transferase from Methylocella silvestris (strain DSM 15510 / CIP 108128 / LMG 27833 / NCIMB 13906 / BL2).